The chain runs to 429 residues: Serine--tRNA ligase (429 aa).

T235–E237 contacts L-serine. Residue R266 to E268 participates in ATP binding. E289 provides a ligand contact to L-serine. E353–S356 provides a ligand contact to ATP. S389 is an L-serine binding site.

This sequence belongs to the class-II aminoacyl-tRNA synthetase family. Type-1 seryl-tRNA synthetase subfamily. In terms of assembly, homodimer. The tRNA molecule binds across the dimer.

The protein resides in the cytoplasm. The enzyme catalyses tRNA(Ser) + L-serine + ATP = L-seryl-tRNA(Ser) + AMP + diphosphate + H(+). It carries out the reaction tRNA(Sec) + L-serine + ATP = L-seryl-tRNA(Sec) + AMP + diphosphate + H(+). The protein operates within aminoacyl-tRNA biosynthesis; selenocysteinyl-tRNA(Sec) biosynthesis; L-seryl-tRNA(Sec) from L-serine and tRNA(Sec): step 1/1. In terms of biological role, catalyzes the attachment of serine to tRNA(Ser). Is also able to aminoacylate tRNA(Sec) with serine, to form the misacylated tRNA L-seryl-tRNA(Sec), which will be further converted into selenocysteinyl-tRNA(Sec). In Haemophilus influenzae (strain 86-028NP), this protein is Serine--tRNA ligase.